Consider the following 393-residue polypeptide: Methylthioribose kinase (393 aa).

Residues asparagine 38, lysine 53, and 107 to 109 each bind ATP; that span reads EDL. A substrate-binding site is contributed by aspartate 225. 242 to 244 is a binding site for ATP; the sequence is DPE. Arginine 332 contributes to the substrate binding site.

It belongs to the methylthioribose kinase family. Homodimer.

The catalysed reaction is 5-(methylsulfanyl)-D-ribose + ATP = 5-(methylsulfanyl)-alpha-D-ribose 1-phosphate + ADP + H(+). The protein operates within amino-acid biosynthesis; L-methionine biosynthesis via salvage pathway; S-methyl-5-thio-alpha-D-ribose 1-phosphate from S-methyl-5'-thioadenosine (hydrolase route): step 2/2. Its function is as follows. Catalyzes the phosphorylation of methylthioribose into methylthioribose-1-phosphate. In Bacillus cereus (strain AH820), this protein is Methylthioribose kinase.